A 399-amino-acid polypeptide reads, in one-letter code: Endo-1,4-beta-xylanase C (399 aa).

The N-terminal stretch at 1-20 (MFKFSASLAALAALVPFVAA) is a signal peptide. The CBM1 domain occupies 21–56 (QSPEWGQCGGIGWTGPTTCVAGTTCVESNPYYSQCL). The 316-residue stretch at 81 to 396 (SAKLHTLAKA…KPAFNGIAAG (316 aa)) folds into the GH10 domain. The Proton donor role is filled by Glu-212. Glu-318 (nucleophile) is an active-site residue. Cys-346 and Cys-352 are disulfide-bonded.

This sequence belongs to the glycosyl hydrolase 10 (cellulase F) family.

It is found in the secreted. The enzyme catalyses Endohydrolysis of (1-&gt;4)-beta-D-xylosidic linkages in xylans.. It functions in the pathway glycan degradation; xylan degradation. In terms of biological role, endo-1,4-beta-xylanase involved in the hydrolysis of xylan, a major structural heterogeneous polysaccharide found in plant biomass representing the second most abundant polysaccharide in the biosphere, after cellulose. This chain is Endo-1,4-beta-xylanase C (xynC), found in Phanerodontia chrysosporium (White-rot fungus).